Consider the following 485-residue polypeptide: Glutamate--tRNA ligase (485 aa).

The 'HIGH' region motif lies at 12 to 22 (PSPTGYMHIGN). The short motif at 253 to 257 (KLSKR) is the 'KMSKS' region element. Lys256 contacts ATP.

It belongs to the class-I aminoacyl-tRNA synthetase family. Glutamate--tRNA ligase type 1 subfamily. In terms of assembly, monomer.

It is found in the cytoplasm. The catalysed reaction is tRNA(Glu) + L-glutamate + ATP = L-glutamyl-tRNA(Glu) + AMP + diphosphate. In terms of biological role, catalyzes the attachment of glutamate to tRNA(Glu) in a two-step reaction: glutamate is first activated by ATP to form Glu-AMP and then transferred to the acceptor end of tRNA(Glu). The polypeptide is Glutamate--tRNA ligase (Clostridium acetobutylicum (strain ATCC 824 / DSM 792 / JCM 1419 / IAM 19013 / LMG 5710 / NBRC 13948 / NRRL B-527 / VKM B-1787 / 2291 / W)).